The chain runs to 203 residues: Transcriptional regulator GfcR (203 aa).

This sequence belongs to the purine/pyrimidine phosphoribosyltransferase family. GfcR subfamily.

In Methanococcoides burtonii (strain DSM 6242 / NBRC 107633 / OCM 468 / ACE-M), this protein is Transcriptional regulator GfcR.